We begin with the raw amino-acid sequence, 92 residues long: Alpha-conotoxin VxXXA (92 aa).

A signal peptide spans 1 to 24; that stretch reads MPKLEMMLLVLLIFPLSYFIAAGG. The propeptide occupies 25-45; the sequence is QVVQVDRRGDGLAGYLQRGDR. 3 positions are modified to 4-hydroxyproline; partial: Pro-55, Pro-70, and Pro-74. 4 disulfide bridges follow: Cys-63–Cys-72, Cys-68–Cys-80, Cys-73–Cys-90, and Cys-78–Cys-92.

The protein belongs to the conotoxin D superfamily. Homodimer or pseudo-homodimer. Three dimers exist: homodimer of VxXXA, pseudo-homodimer of both VxXXA and [hydroxyPro-74]VxXXA and homodimer of [hydroxyPro-74]VxXXA. These three components exist in a 1:2:1 ratio. In terms of processing, vxXXA stands for the form with the Pro-55 hydroxylated. A second major form has both Pro-55 and Pro-74 hydroxylated. The two major forms VxXXA and [hydroxyPro-74]VxXXA exist in a 1:1 ratio. Minor forms are [hydroxyPro-70,hydroxyPro-74]VxXXA and [Pro-55]VxXXA. In terms of tissue distribution, expressed by the venom duct.

It localises to the secreted. Alpha-conotoxins act on postsynaptic membranes, they bind to the nicotinic acetylcholine receptors (nAChR) and thus inhibit them. Through its two C-terminal domains, this homodimeric protein would bind to two nAChR allosteric sites, located outside the nAChR C-loop of the principal binding face and at the adjacent binding interface in a clockwise direction. This toxin specifically blocks mammalian neuronal nAChR of the alpha-7/CHRNA7, alpha-3-beta-2/CHRNA3-CHRNB2 (IC(50)=370 nM) and alpha-4-beta-2/CHRNA4-CHRNB2 subtypes. VxXXB inhibits alpha-7/CHRNA7 and alpha-3-beta-2/CHRNA3-CHRNB2 nAChR subtypes with the highest efficiency, followed by VxXXA and VxXXC. VxXXB and VxXXC inhibit the alpha-4-beta-2/CHRNA4-CHRNB2 nAChR subtype more efficiently than VxXXA. This is Alpha-conotoxin VxXXA from Conus vexillum (Flag cone).